Here is a 115-residue protein sequence, read N- to C-terminus: Probable 4-amino-4-deoxy-L-arabinose-phosphoundecaprenol flippase subunit ArnE (115 aa).

4 helical membrane-spanning segments follow: residues 1–21, 43–63, 65–85, and 93–113; these read MIVG…GQLC, WLAL…NVLQ, LPLS…TLAA, and TTAR…LMSI. One can recognise an EamA domain in the interval 44–113; the sequence is LALAVLLLGL…IMLGILLMSI (70 aa).

Belongs to the ArnE family. In terms of assembly, heterodimer of ArnE and ArnF.

It localises to the cell inner membrane. It functions in the pathway bacterial outer membrane biogenesis; lipopolysaccharide biosynthesis. Translocates 4-amino-4-deoxy-L-arabinose-phosphoundecaprenol (alpha-L-Ara4N-phosphoundecaprenol) from the cytoplasmic to the periplasmic side of the inner membrane. This Serratia proteamaculans (strain 568) protein is Probable 4-amino-4-deoxy-L-arabinose-phosphoundecaprenol flippase subunit ArnE.